Consider the following 201-residue polypeptide: Urease accessory protein UreG (201 aa).

GTP is bound at residue 11–18; it reads GPVGSGKT.

This sequence belongs to the SIMIBI class G3E GTPase family. UreG subfamily. As to quaternary structure, homodimer. UreD, UreF and UreG form a complex that acts as a GTP-hydrolysis-dependent molecular chaperone, activating the urease apoprotein by helping to assemble the nickel containing metallocenter of UreC. The UreE protein probably delivers the nickel.

It is found in the cytoplasm. Its function is as follows. Facilitates the functional incorporation of the urease nickel metallocenter. This process requires GTP hydrolysis, probably effectuated by UreG. This chain is Urease accessory protein UreG, found in Synechococcus sp. (strain CC9605).